Reading from the N-terminus, the 421-residue chain is Testin (421 aa).

The 108-residue stretch at 92-199 folds into the PET domain; sequence MILTNPVAAK…GDVKLPCEMD (108 aa). LIM zinc-binding domains are found at residues 234 to 297, 299 to 359, and 362 to 421; these read YSCY…CDSE, PRCA…NHAV, and QGCH…KRMS.

Belongs to the prickle / espinas / testin family. Interacts via LIM domain 1 with ZYX. Interacts (via LIM domain 3) with ENAH and VASP. Interacts with ALKBH4, talin, actin, alpha-actinin, GRIP1 and PXN. Interacts (via LIM domain 2) with ACTL7A (via N-terminus). Heterodimer with ACTL7A; the heterodimer interacts with ENAH to form a heterotrimer.

It localises to the cytoplasm. The protein localises to the cell junction. The protein resides in the focal adhesion. In terms of biological role, scaffold protein that may play a role in cell adhesion, cell spreading and in the reorganization of the actin cytoskeleton. Plays a role in the regulation of cell proliferation. May act as a tumor suppressor. The chain is Testin (TES) from Nomascus leucogenys (Northern white-cheeked gibbon).